The chain runs to 233 residues: 7-cyano-7-deazaguanine synthase (233 aa).

Residue 7–17 (LSGGLDSAVTS) participates in ATP binding. Zn(2+)-binding residues include Cys195, Cys206, Cys209, and Cys212.

This sequence belongs to the QueC family. Requires Zn(2+) as cofactor.

It catalyses the reaction 7-carboxy-7-deazaguanine + NH4(+) + ATP = 7-cyano-7-deazaguanine + ADP + phosphate + H2O + H(+). The protein operates within purine metabolism; 7-cyano-7-deazaguanine biosynthesis. Catalyzes the ATP-dependent conversion of 7-carboxy-7-deazaguanine (CDG) to 7-cyano-7-deazaguanine (preQ(0)). The sequence is that of 7-cyano-7-deazaguanine synthase from Methanococcus maripaludis (strain C7 / ATCC BAA-1331).